The primary structure comprises 107 residues: Large ribosomal subunit protein uL24 (107 aa).

The protein belongs to the universal ribosomal protein uL24 family. Part of the 50S ribosomal subunit.

In terms of biological role, one of two assembly initiator proteins, it binds directly to the 5'-end of the 23S rRNA, where it nucleates assembly of the 50S subunit. One of the proteins that surrounds the polypeptide exit tunnel on the outside of the subunit. This is Large ribosomal subunit protein uL24 from Fervidobacterium nodosum (strain ATCC 35602 / DSM 5306 / Rt17-B1).